Reading from the N-terminus, the 486-residue chain is Arginine/agmatine antiporter (486 aa).

A run of 12 helical transmembrane segments spans residues 12 to 32, 41 to 61, 85 to 105, 129 to 149, 161 to 181, 211 to 231, 242 to 262, 296 to 316, 341 to 361, 367 to 387, 418 to 438, and 461 to 481; these read LGAI…GIFS, AGAG…FFIA, GFGP…QIFG, NTIP…FIVL, IGTI…AFFF, STML…VMSA, ATIL…LLPF, IGLL…VAEI, VSLY…YFST, MLSI…AFLV, IWLI…LLAL, and EVTK…LFST.

The protein belongs to the amino acid-polyamine-organocation (APC) superfamily. Basic amino acid/polyamine antiporter (APA) (TC 2.A.3.2) family.

It localises to the cell inner membrane. Its function is as follows. Catalyzes the exchange of L-arginine for agmatine. The arginine uptake by the bacterium in the macrophage may be a virulence factor against the host innate immune response. The sequence is that of Arginine/agmatine antiporter (aaxC) from Chlamydia felis (strain Fe/C-56) (Chlamydophila felis).